The following is a 38-amino-acid chain: VRNFVTCRINRGFCVPIRCPGHRRQIGTCLGPQIKCCR.

Intrachain disulfides connect C7–C36, C14–C29, and C19–C37.

This sequence belongs to the beta-defensin family. In terms of tissue distribution, neutrophilic granules.

It localises to the secreted. Has bactericidal activity. Active against E.coli ML35 and S.aureus 502A. The protein is Beta-defensin 8 (DEFB8) of Bos taurus (Bovine).